We begin with the raw amino-acid sequence, 291 residues long: 4-hydroxy-tetrahydrodipicolinate synthase (291 aa).

A pyruvate-binding site is contributed by threonine 45. Catalysis depends on tyrosine 131, which acts as the Proton donor/acceptor. Residue lysine 159 is the Schiff-base intermediate with substrate of the active site. Isoleucine 202 provides a ligand contact to pyruvate.

This sequence belongs to the DapA family. In terms of assembly, homotetramer; dimer of dimers.

The protein resides in the cytoplasm. The enzyme catalyses L-aspartate 4-semialdehyde + pyruvate = (2S,4S)-4-hydroxy-2,3,4,5-tetrahydrodipicolinate + H2O + H(+). It participates in amino-acid biosynthesis; L-lysine biosynthesis via DAP pathway; (S)-tetrahydrodipicolinate from L-aspartate: step 3/4. Functionally, catalyzes the condensation of (S)-aspartate-beta-semialdehyde [(S)-ASA] and pyruvate to 4-hydroxy-tetrahydrodipicolinate (HTPA). In Methanococcoides burtonii (strain DSM 6242 / NBRC 107633 / OCM 468 / ACE-M), this protein is 4-hydroxy-tetrahydrodipicolinate synthase.